The primary structure comprises 442 residues: Methionine aminopeptidase 2 (442 aa).

Residues 1 to 81 (MAAQAPTEAL…APTAQSDPPR (81 aa)) form a disordered region. Over residues 56–72 (PLRRRRRRRRTRKKKKA) the composition is skewed to basic residues. Residue His196 participates in substrate binding. Positions 216, 227, and 296 each coordinate a divalent metal cation. Residue His304 participates in substrate binding. A divalent metal cation is bound by residues Glu329 and Glu423.

Belongs to the peptidase M24A family. Methionine aminopeptidase eukaryotic type 2 subfamily. Requires Co(2+) as cofactor. The cofactor is Zn(2+). Mn(2+) is required as a cofactor. It depends on Fe(2+) as a cofactor.

The protein resides in the cytoplasm. The catalysed reaction is Release of N-terminal amino acids, preferentially methionine, from peptides and arylamides.. Cotranslationally removes the N-terminal methionine from nascent proteins. The N-terminal methionine is often cleaved when the second residue in the primary sequence is small and uncharged (Met-Ala-, Cys, Gly, Pro, Ser, Thr, or Val). This chain is Methionine aminopeptidase 2, found in Verticillium alfalfae (strain VaMs.102 / ATCC MYA-4576 / FGSC 10136) (Verticillium wilt of alfalfa).